Consider the following 531-residue polypeptide: Phosphoinositide phospholipase C 9 (531 aa).

The region spanning 107-253 (RDMNAPLSHY…LQNKILISRR (147 aa)) is the PI-PLC X-box domain. One can recognise a PI-PLC Y-box domain in the interval 265–385 (ENGVELEIQE…GYVKKPNFLL (121 aa)). Phosphoserine is present on serine 276. A C2 domain is found at 386-513 (NAGSSGVFYP…EGIRAVPLYD (128 aa)).

Ca(2+) is required as a cofactor. As to expression, expressed in leaves, roots, flowers and siliques.

It localises to the cell membrane. The enzyme catalyses a 1,2-diacyl-sn-glycero-3-phospho-(1D-myo-inositol-4,5-bisphosphate) + H2O = 1D-myo-inositol 1,4,5-trisphosphate + a 1,2-diacyl-sn-glycerol + H(+). The production of the second messenger molecules diacylglycerol (DAG) and inositol 1,4,5-trisphosphate (IP3) is mediated by activated phosphatidylinositol-specific phospholipase C enzymes. The polypeptide is Phosphoinositide phospholipase C 9 (PLC9) (Arabidopsis thaliana (Mouse-ear cress)).